We begin with the raw amino-acid sequence, 403 residues long: MAMVVNQWQENISADPGSQLQMCSQEPGGTPGTPSGSTPGNDALSGDKIPNVDCMVCGDKSSGKHYGQFTCEGCKSFFKRSVRRNLSYTCRGNRDCPIDQHHRNQCQYCRLKKCLKVGMRREAVQRGRMSNSQSSPGQYLSNGSDPYNGQPYLSGFISLLLRAEPYPTSRYGAQCMQSNNLMGIENICELAARLLFSAVEWAKNIPFFPDLQLMDQVALLRMSWSELFVLNAAQCSMPLHVAPLLAAAGLHASPMSAERVVAFMDHIRVFQEQVEKLKALQVDTAEYSCLKSIVLFTSDAMGLSDVAHVESIQEKSQCALEEYVRNQYPNQPNRFGRLLLRLPSLRIVSSPVIEQLFFVRLVGKTPIETLLRDMLLSGSSYNWPYMPVQRDRPISIHYNENGP.

The tract at residues 16 to 44 (PGSQLQMCSQEPGGTPGTPSGSTPGNDAL) is disordered. The segment at residues 51–126 (NVDCMVCGDK…VGMRREAVQR (76 aa)) is a DNA-binding region (nuclear receptor). 2 consecutive NR C4-type zinc fingers follow at residues 54-74 (CMVCGDKSSGKHYGQFTCEGC) and 90-114 (CRGNRDCPIDQHHRNQCQYCRLKKC). One can recognise an NR LBD domain in the interval 152–378 (YLSGFISLLL…TLLRDMLLSG (227 aa)).

The protein belongs to the nuclear hormone receptor family. NR2 subfamily.

The protein localises to the nucleus. Functionally, putative receptor that is required in photoreceptor cells precursors during eye development. The sequence is that of Nuclear receptor subfamily 2 group F member 5 (nr2f5) from Danio rerio (Zebrafish).